A 239-amino-acid polypeptide reads, in one-letter code: Ribonuclease PH (239 aa).

Residues arginine 86 and 124 to 126 (GTR) contribute to the phosphate site.

The protein belongs to the RNase PH family. As to quaternary structure, homohexameric ring arranged as a trimer of dimers.

It carries out the reaction tRNA(n+1) + phosphate = tRNA(n) + a ribonucleoside 5'-diphosphate. Its function is as follows. Phosphorolytic 3'-5' exoribonuclease that plays an important role in tRNA 3'-end maturation. Removes nucleotide residues following the 3'-CCA terminus of tRNAs; can also add nucleotides to the ends of RNA molecules by using nucleoside diphosphates as substrates, but this may not be physiologically important. Probably plays a role in initiation of 16S rRNA degradation (leading to ribosome degradation) during starvation. The chain is Ribonuclease PH from Anaeromyxobacter dehalogenans (strain 2CP-1 / ATCC BAA-258).